A 195-amino-acid chain; its full sequence is Probable GTP-binding protein EngB (195 aa).

The region spanning Glu24–Leu195 is the EngB-type G domain. Residues Gly32–Ser39, Gly59–Leu63, Asp77–Gly80, Thr144–Asp147, and Phe176–Ser178 each bind GTP. Residues Ser39 and Thr61 each contribute to the Mg(2+) site.

It belongs to the TRAFAC class TrmE-Era-EngA-EngB-Septin-like GTPase superfamily. EngB GTPase family. Requires Mg(2+) as cofactor.

In terms of biological role, necessary for normal cell division and for the maintenance of normal septation. In Streptococcus pneumoniae (strain JJA), this protein is Probable GTP-binding protein EngB.